A 444-amino-acid polypeptide reads, in one-letter code: Probable glycine dehydrogenase (decarboxylating) subunit 1 (444 aa).

The protein belongs to the GcvP family. N-terminal subunit subfamily. The glycine cleavage system is composed of four proteins: P, T, L and H. In this organism, the P 'protein' is a heterodimer of two subunits.

The enzyme catalyses N(6)-[(R)-lipoyl]-L-lysyl-[glycine-cleavage complex H protein] + glycine + H(+) = N(6)-[(R)-S(8)-aminomethyldihydrolipoyl]-L-lysyl-[glycine-cleavage complex H protein] + CO2. Functionally, the glycine cleavage system catalyzes the degradation of glycine. The P protein binds the alpha-amino group of glycine through its pyridoxal phosphate cofactor; CO(2) is released and the remaining methylamine moiety is then transferred to the lipoamide cofactor of the H protein. The chain is Probable glycine dehydrogenase (decarboxylating) subunit 1 from Carboxydothermus hydrogenoformans (strain ATCC BAA-161 / DSM 6008 / Z-2901).